Here is a 576-residue protein sequence, read N- to C-terminus: WAP, Kazal, immunoglobulin, Kunitz and NTR domain-containing protein 2 (576 aa).

The first 34 residues, 1 to 34 (MWAPRCRRFWSRWEQVAALLLLLLLLGVPPRSLA), serve as a signal peptide directing secretion. The region spanning 39-92 (RYSHAGICPNDMNPNLWVDAQSTCRRECETDQECETYEKCCPNVCGTKSCVAAR) is the WAP domain. 8 disulfide bridges follow: cysteine 46–cysteine 79, cysteine 62–cysteine 83, cysteine 66–cysteine 78, cysteine 72–cysteine 88, cysteine 134–cysteine 164, cysteine 138–cysteine 157, cysteine 146–cysteine 175, and cysteine 231–cysteine 287. A Kazal-like domain is found at 126–177 (WDGQPVCKCKDRCEKEPSFTCASDGLTYYNRCYMDAEACSKGITLAVVTCRY). The region spanning 210–303 (PALLNNPVHQ…GVLRADFPLS (94 aa)) is the Ig-like C2-type domain. N-linked (GlcNAc...) asparagine glycosylation is present at asparagine 319. Disulfide bonds link cysteine 328/cysteine 378, cysteine 337/cysteine 361, cysteine 353/cysteine 374, cysteine 386/cysteine 436, cysteine 395/cysteine 419, cysteine 411/cysteine 432, cysteine 445/cysteine 515, cysteine 448/cysteine 517, and cysteine 459/cysteine 566. BPTI/Kunitz inhibitor domains follow at residues 328–378 (CLKP…MLAC) and 386–436 (CSLP…EESC). An NTR domain is found at 445-566 (CRACKPRQKL…LREVMHKKTC (122 aa)). N-linked (GlcNAc...) asparagine glycosylation is present at asparagine 519.

Belongs to the WFIKKN family. In terms of assembly, interacts with both mature and propeptide myostatin/MSTN. As to expression, primarily expressed in ovary, testis and brain, but not in liver. In fetal tissues, it is primarily expressed in brain, skeletal muscle, thymus and kidney.

The protein localises to the secreted. Its function is as follows. Protease-inhibitor that contains multiple distinct protease inhibitor domains. Probably has serine protease- and metalloprotease-inhibitor activity. Inhibits the biological activity of mature myostatin, but not activin. The protein is WAP, Kazal, immunoglobulin, Kunitz and NTR domain-containing protein 2 (WFIKKN2) of Homo sapiens (Human).